Here is a 300-residue protein sequence, read N- to C-terminus: Phosphatidylglycerol--prolipoprotein diacylglyceryl transferase (300 aa).

7 helical membrane-spanning segments follow: residues 17–37, 59–79, 94–114, 129–149, 204–224, 230–250, and 265–285; these read LAIRWYGLMYLAAFIMFLWFG, MLFYGVLGVILGGRLGYVLFY, VWEGGMAFHGGFLGVVVAMML, FIAPMVPCGLAAGRLGNFING, SQIYQFLGEGVLFFILLWLYA, MGAVSGAFLLGYGVFRFAAEF, and LSMGQWLSLPMILIGIAMLVW. Arg142 is an a 1,2-diacyl-sn-glycero-3-phospho-(1'-sn-glycerol) binding site.

The protein belongs to the Lgt family.

It localises to the cell inner membrane. The enzyme catalyses L-cysteinyl-[prolipoprotein] + a 1,2-diacyl-sn-glycero-3-phospho-(1'-sn-glycerol) = an S-1,2-diacyl-sn-glyceryl-L-cysteinyl-[prolipoprotein] + sn-glycerol 1-phosphate + H(+). Its pathway is protein modification; lipoprotein biosynthesis (diacylglyceryl transfer). Catalyzes the transfer of the diacylglyceryl group from phosphatidylglycerol to the sulfhydryl group of the N-terminal cysteine of a prolipoprotein, the first step in the formation of mature lipoproteins. The chain is Phosphatidylglycerol--prolipoprotein diacylglyceryl transferase from Ralstonia pickettii (strain 12J).